The following is a 323-amino-acid chain: uncharacterized protein (323 aa).

This is an uncharacterized protein from Bacillus subtilis (strain 168).